Here is a 557-residue protein sequence, read N- to C-terminus: Dihydroxy-acid dehydratase (557 aa).

A [2Fe-2S] cluster-binding site is contributed by Cys-47. Asp-79 lines the Mg(2+) pocket. Cys-120 provides a ligand contact to [2Fe-2S] cluster. Residues Asp-121 and Lys-122 each coordinate Mg(2+). An N6-carboxylysine modification is found at Lys-122. Residue Cys-192 participates in [2Fe-2S] cluster binding. Glu-444 serves as a coordination point for Mg(2+). Ser-470 serves as the catalytic Proton acceptor.

The protein belongs to the IlvD/Edd family. In terms of assembly, homodimer. The cofactor is [2Fe-2S] cluster. Requires Mg(2+) as cofactor.

It carries out the reaction (2R)-2,3-dihydroxy-3-methylbutanoate = 3-methyl-2-oxobutanoate + H2O. The catalysed reaction is (2R,3R)-2,3-dihydroxy-3-methylpentanoate = (S)-3-methyl-2-oxopentanoate + H2O. Its pathway is amino-acid biosynthesis; L-isoleucine biosynthesis; L-isoleucine from 2-oxobutanoate: step 3/4. It participates in amino-acid biosynthesis; L-valine biosynthesis; L-valine from pyruvate: step 3/4. Functions in the biosynthesis of branched-chain amino acids. Catalyzes the dehydration of (2R,3R)-2,3-dihydroxy-3-methylpentanoate (2,3-dihydroxy-3-methylvalerate) into 2-oxo-3-methylpentanoate (2-oxo-3-methylvalerate) and of (2R)-2,3-dihydroxy-3-methylbutanoate (2,3-dihydroxyisovalerate) into 2-oxo-3-methylbutanoate (2-oxoisovalerate), the penultimate precursor to L-isoleucine and L-valine, respectively. In Synechococcus sp. (strain CC9605), this protein is Dihydroxy-acid dehydratase.